The primary structure comprises 337 residues: tRNA N6-adenosine threonylcarbamoyltransferase (337 aa).

The Fe cation site is built by His-111 and His-115. Residues 134–138 (LVSGG), Asp-167, Gly-180, and Asn-272 contribute to the substrate site. Residue Asp-300 coordinates Fe cation.

The protein belongs to the KAE1 / TsaD family. The cofactor is Fe(2+).

It localises to the cytoplasm. The enzyme catalyses L-threonylcarbamoyladenylate + adenosine(37) in tRNA = N(6)-L-threonylcarbamoyladenosine(37) in tRNA + AMP + H(+). Functionally, required for the formation of a threonylcarbamoyl group on adenosine at position 37 (t(6)A37) in tRNAs that read codons beginning with adenine. Is involved in the transfer of the threonylcarbamoyl moiety of threonylcarbamoyl-AMP (TC-AMP) to the N6 group of A37, together with TsaE and TsaB. TsaD likely plays a direct catalytic role in this reaction. In Salmonella choleraesuis (strain SC-B67), this protein is tRNA N6-adenosine threonylcarbamoyltransferase.